The chain runs to 469 residues: Serine carboxypeptidase-like 41 (469 aa).

The N-terminal stretch at 1–20 (MAIVSLRDVAMVMVTVQVFA) is a signal peptide. 3 disulfide bridges follow: Cys83/Cys342, Cys243/Cys260, and Cys285/Cys310. An N-linked (GlcNAc...) asparagine glycan is attached at Asn134. Ser175 is an active-site residue. Asn255 is a glycosylation site (N-linked (GlcNAc...) asparagine). N-linked (GlcNAc...) asparagine glycans are attached at residues Asn331 and Asn347. Active-site residues include Asp379 and His436. N-linked (GlcNAc...) asparagine glycosylation is present at Asn461.

The protein belongs to the peptidase S10 family. In terms of tissue distribution, expressed in flowers.

It localises to the secreted. Functionally, probable carboxypeptidase. This chain is Serine carboxypeptidase-like 41 (SCPL41), found in Arabidopsis thaliana (Mouse-ear cress).